Reading from the N-terminus, the 148-residue chain is Large ribosomal subunit protein bL9 (148 aa).

The protein belongs to the bacterial ribosomal protein bL9 family.

Binds to the 23S rRNA. The protein is Large ribosomal subunit protein bL9 of Agathobacter rectalis (strain ATCC 33656 / DSM 3377 / JCM 17463 / KCTC 5835 / VPI 0990) (Eubacterium rectale).